The primary structure comprises 375 residues: Probable Na(+)/H(+) antiporter GerT (375 aa).

The next 10 helical transmembrane spans lie at 27–47, 89–109, 112–132, 145–165, 183–203, 204–224, 226–246, 261–281, 288–308, and 350–370; these read PSVL…LGII, AGGI…FGLI, HAIF…VQTL, TILG…AFVM, IIFF…IMKM, LVPL…CFSF, YYSE…GIAI, PIAY…EITF, LWFI…GSGL, and ENFT…PPLL.

This sequence belongs to the monovalent cation:proton antiporter 2 (CPA2) transporter (TC 2.A.37) family.

It is found in the membrane. Functionally, contributes to the success of spore outgrowth from the germinated state during alkaline or Na(+) stress. Does not have a significant role in germination. The polypeptide is Probable Na(+)/H(+) antiporter GerT (gerT) (Bacillus cereus).